The following is a 478-amino-acid chain: ATP-dependent DNA helicase RecQ (478 aa).

The Helicase ATP-binding domain maps to 28-202; it reads IDCLLARRDC…VEGLNLRSPE (175 aa). Residue 41–48 participates in ATP binding; it reads LPTGGGKS. The DEAH box motif lies at 142–145; the sequence is DEAH. The region spanning 229–380 is the Helicase C-terminal domain; the sequence is QLRRFLLKHL…RAEVLSQQIP (152 aa). Cysteine 447, cysteine 467, cysteine 470, and cysteine 473 together coordinate Zn(2+).

The protein belongs to the helicase family. RecQ subfamily. Requires Mg(2+) as cofactor. It depends on Zn(2+) as a cofactor.

The catalysed reaction is Couples ATP hydrolysis with the unwinding of duplex DNA by translocating in the 3'-5' direction.. It catalyses the reaction ATP + H2O = ADP + phosphate + H(+). An ATP-dependent DNA helicase which unwinds DNA in a 3'-5' direction. The sequence is that of ATP-dependent DNA helicase RecQ from Synechocystis sp. (strain ATCC 27184 / PCC 6803 / Kazusa).